The primary structure comprises 277 residues: NADPH-dependent 7-cyano-7-deazaguanine reductase (277 aa).

86-88 (IES) lines the substrate pocket. 88–89 (SK) lines the NADPH pocket. Catalysis depends on Cys-184, which acts as the Thioimide intermediate. Asp-191 acts as the Proton donor in catalysis. 223–224 (HE) provides a ligand contact to substrate. NADPH is bound at residue 252 to 253 (RG).

The protein belongs to the GTP cyclohydrolase I family. QueF type 2 subfamily. As to quaternary structure, homodimer.

Its subcellular location is the cytoplasm. It carries out the reaction 7-aminomethyl-7-carbaguanine + 2 NADP(+) = 7-cyano-7-deazaguanine + 2 NADPH + 3 H(+). It participates in tRNA modification; tRNA-queuosine biosynthesis. Catalyzes the NADPH-dependent reduction of 7-cyano-7-deazaguanine (preQ0) to 7-aminomethyl-7-deazaguanine (preQ1). This chain is NADPH-dependent 7-cyano-7-deazaguanine reductase, found in Chromohalobacter salexigens (strain ATCC BAA-138 / DSM 3043 / CIP 106854 / NCIMB 13768 / 1H11).